The sequence spans 503 residues: V-type proton ATPase subunit B (503 aa).

Arginine 378 contacts ATP. Residues serine 491, serine 492, serine 502, and serine 503 each carry the phosphoserine modification.

The protein belongs to the ATPase alpha/beta chains family. V-ATPase is a heteromultimeric enzyme composed of a peripheral catalytic V1 complex (components A to H) attached to an integral membrane V0 proton pore complex (components: a, c, c', c'', d, e, f and VOA1). Interacts with rav1.

The protein resides in the vacuole membrane. Its function is as follows. Non-catalytic subunit of the V1 complex of vacuolar(H+)-ATPase (V-ATPase), a multisubunit enzyme composed of a peripheral complex (V1) that hydrolyzes ATP and a membrane integral complex (V0) that translocates protons. V-ATPase is responsible for acidifying and maintaining the pH of intracellular compartments. The chain is V-type proton ATPase subunit B from Schizosaccharomyces pombe (strain 972 / ATCC 24843) (Fission yeast).